The sequence spans 433 residues: 4-hydroxy-3-methylbut-2-en-1-yl diphosphate synthase (flavodoxin) (433 aa).

Over residues Met-1–Pro-10 the composition is skewed to polar residues. A disordered region spans residues Met-1–Arg-24. Residues Cys-320, Cys-323, Cys-366, and Glu-373 each coordinate [4Fe-4S] cluster.

Belongs to the IspG family. [4Fe-4S] cluster is required as a cofactor.

The enzyme catalyses (2E)-4-hydroxy-3-methylbut-2-enyl diphosphate + oxidized [flavodoxin] + H2O + 2 H(+) = 2-C-methyl-D-erythritol 2,4-cyclic diphosphate + reduced [flavodoxin]. The protein operates within isoprenoid biosynthesis; isopentenyl diphosphate biosynthesis via DXP pathway; isopentenyl diphosphate from 1-deoxy-D-xylulose 5-phosphate: step 5/6. In terms of biological role, converts 2C-methyl-D-erythritol 2,4-cyclodiphosphate (ME-2,4cPP) into 1-hydroxy-2-methyl-2-(E)-butenyl 4-diphosphate. This is 4-hydroxy-3-methylbut-2-en-1-yl diphosphate synthase (flavodoxin) from Bordetella bronchiseptica (strain ATCC BAA-588 / NCTC 13252 / RB50) (Alcaligenes bronchisepticus).